We begin with the raw amino-acid sequence, 584 residues long: MTKRKKEVIDVDCSEKKDFVIDWSSAMDKEDEVPELEIVNTTKPTPPPPPTFFSDDQTDSPKLLTDRDLDEQLERKKAILTLGPGLPDKGEKIRLKIADLEEEKQRRVLEGSKMEVDRSSKVVSSTSSGSDVLPQGNAVSKDTSRGNADSKDTSRQGNADSKEVSRSTFSAVFSKPKTDSQSKKAFGKELEDLGCERRKHKAGRKPVTRLSNGWRLLPDVGKAEHSAKQFDSGLKESKGNKKSKEPYGKKRPMESSTYSLIDDDDDDDDDDDNDTSGHETPREWSWEKSPSQSSRRRKKSEDTVINVDEEEAQPSTVAEQAAELPEGLQEDICYPTRDDPHFVQVCLKDLECLAPREYLTSPVMNFYMRFLQQQISSSNQISADCHFFNTYFYKKLSDAVTYKGNDKDAFFVRFRRWWKGIDLFRKAYIFIPIHEDLHWSLVIVCIPDKKDESGLTILHLDSLGLHSRKSIVENVKRFLKDEWNYLNQDDYSLDLPISEKVWKNLPRRISEAVVQVPQQKNDFDCGPFVLFFIKRFIEEAPQRLKRKDLGMFDKKWFRPDEASALRIKIRNTLIELFRVSDQTE.

2 disordered regions span residues 28-64 and 99-323; these read DKED…PKLL and DLEE…QAAE. Over residues 99-120 the composition is skewed to basic and acidic residues; it reads DLEEEKQRRVLEGSKMEVDRSS. Positions 121 to 132 are enriched in low complexity; the sequence is KVVSSTSSGSDV. Basic and acidic residues-rich tracts occupy residues 142 to 165 and 176 to 196; these read DTSR…KEVS and PKTD…LGCE. Over residues 197–207 the composition is skewed to basic residues; sequence RRKHKAGRKPV. Over residues 221 to 253 the composition is skewed to basic and acidic residues; sequence GKAEHSAKQFDSGLKESKGNKKSKEPYGKKRPM. A compositionally biased stretch (acidic residues) spans 261 to 274; sequence IDDDDDDDDDDDND. Residues 275-286 are compositionally biased toward basic and acidic residues; the sequence is TSGHETPREWSW. Active-site residues include histidine 438, aspartate 461, and cysteine 525.

This sequence belongs to the peptidase C48 family.

Its subcellular location is the nucleus speckle. In terms of biological role, protease that catalyzes two essential functions in the SUMO pathway: processing of full-length SUMOs to their mature forms and deconjugation of SUMO from targeted proteins. Cleaves precursors of SUM1 and SUM2, but not of SUM3 or SUM5. Able to release SUM1 and SUM2 from conjugates, but unable to cleave SUM3. Protease activity mainly directed at deconjugating SUM1 and SUM2 from their target proteins. Regulates salt stress responses and flowering time. Redundant with ULP1C. This chain is Ubiquitin-like-specific protease 1D (ULP1D), found in Arabidopsis thaliana (Mouse-ear cress).